The primary structure comprises 521 residues: Cytochrome P450 monooxygenase gloO (521 aa).

Residues 1 to 26 (MIAALFTTNLQLGAVGVFIFALLAFA) form the signal peptide. Cys-464 serves as a coordination point for heme.

Belongs to the cytochrome P450 family. Heme serves as cofactor.

It participates in mycotoxin biosynthesis. Cytochrome P450 monooxygenase; part of the gene cluster that mediates the biosynthesis of pneumocandins, lipohexapeptides of the echinocandin family that prevent fungal cell wall formation by non-competitive inhibition of beta-1,3-glucan synthase. The 10,12-dimethylmyristoyl side chain is synthesized by the reducing polyketide synthase gloL/GLPKS4. The thioesterase gloN/GLHYD exclusively interacts with gloL/GLPKS4 to maintain turnover of the polyketide side chain. The 10R,12S-dimethylmyristic acid is then transferred to the first thiolation domain of the nonribosomal peptide synthetase gloA/GLNRPS4 by the acyl-AMP ligase gloD/GLligase, followed by its acylation to L-ornithine to trigger elongation of the cyclic hexapeptide. L-ornithine, 4R-hydroxyl-L-proline (generated from L-proline by the dioxygenase gloF/GLOXY2), 3S-hydroxyl-L-homotyrosine (generated by gloG/GLHtyB, gloH/GLHtyA, gloI/GLHtyC, gloJ/GLHtyD and hydroxylated at C-3 by the dioxygenase gloM/GLOXY1), 3R-hydroxyl-L-glutamine (generated from L-glutamine probably by the dioxygenase gloE/GLOXY3) and 3S-hydroxyl-L-proline (generated from L-proline by the dioxygenase gloF/GLOXY2 to yield pneumocandin B0), or 3S-hydroxyl-4S-methyl-L-proline (generated from L-leucine by the dioxygenase gloC/GLOXY4 to yield pneumocandin A0) are sequentially added to the growing chain. The last C domain of gloA/GLNRPS4 is proposed to be responsible for cyclization by condensation to form the peptide bond between L-ornithine and 3S-hydroxyl-4S-methyl-L-proline (for pneumocandin A0) or 3S-hydroxyl-L-proline (for pneumocandin B0). Finally, the subsequent C-4 hydroxylation of 3S-hydroxyl-L-homotyrosine and L-ornithine dihydroxylation at C-4 and C-5 are performed by the cytochrome P450 monooxygenases gloP/GLP450-1 and gloO/GLP450-2, respectively. This Glarea lozoyensis (strain ATCC 20868 / MF5171) protein is Cytochrome P450 monooxygenase gloO.